The primary structure comprises 297 residues: Homoserine kinase (297 aa).

Residue 82–92 (PVSRGLGSSAA) participates in ATP binding.

Belongs to the GHMP kinase family. Homoserine kinase subfamily.

Its subcellular location is the cytoplasm. It carries out the reaction L-homoserine + ATP = O-phospho-L-homoserine + ADP + H(+). Its pathway is amino-acid biosynthesis; L-threonine biosynthesis; L-threonine from L-aspartate: step 4/5. In terms of biological role, catalyzes the ATP-dependent phosphorylation of L-homoserine to L-homoserine phosphate. The polypeptide is Homoserine kinase (Clostridium botulinum (strain 657 / Type Ba4)).